The chain runs to 192 residues: MYQELIRNELTEAAGVLQAFLADEQNLKNIEAAAKLLADSFKQEGKVLSCGNGGSHCDAMHFAEELTGRYRENRPGYAGIAISDPSHLSCVSNDFGYDYVFSRYVEAVGRRGDVLLGISTSGNSGNILKAIEAAHAKGMKVIALTGKDGGKMAGLADVEIRVPHFGYADRIQEVHIKVIHILIQLVEKEMAK.

One can recognise an SIS domain in the interval 37-192 (LADSFKQEGK…IQLVEKEMAK (156 aa)). 52-54 (NGG) is a substrate binding site. 2 residues coordinate Zn(2+): His-61 and Glu-65. Substrate contacts are provided by residues Glu-65, 93 to 94 (ND), 119 to 121 (STS), Ser-124, and Gln-172. 2 residues coordinate Zn(2+): Gln-172 and His-180.

The protein belongs to the SIS family. GmhA subfamily. In terms of assembly, homotetramer. It depends on Zn(2+) as a cofactor.

Its subcellular location is the cytoplasm. It carries out the reaction 2 D-sedoheptulose 7-phosphate = D-glycero-alpha-D-manno-heptose 7-phosphate + D-glycero-beta-D-manno-heptose 7-phosphate. It functions in the pathway carbohydrate biosynthesis; D-glycero-D-manno-heptose 7-phosphate biosynthesis; D-glycero-alpha-D-manno-heptose 7-phosphate and D-glycero-beta-D-manno-heptose 7-phosphate from sedoheptulose 7-phosphate: step 1/1. In terms of biological role, catalyzes the isomerization of sedoheptulose 7-phosphate in D-glycero-D-manno-heptose 7-phosphate. The protein is Phosphoheptose isomerase of Aeromonas salmonicida (strain A449).